We begin with the raw amino-acid sequence, 198 residues long: HTH-type transcriptional regulator BetI (198 aa).

The HTH tetR-type domain maps to 8–68; the sequence is KIRRPQLVSA…ETMRDILRQL (61 aa). Residues 31 to 50 constitute a DNA-binding region (H-T-H motif); the sequence is SVSLISQEAGVSSGIINHYF.

It functions in the pathway amine and polyamine biosynthesis; betaine biosynthesis via choline pathway [regulation]. Functionally, repressor involved in the biosynthesis of the osmoprotectant glycine betaine. It represses transcription of the choline transporter BetT and the genes of BetAB involved in the synthesis of glycine betaine. This is HTH-type transcriptional regulator BetI from Vibrio vulnificus (strain YJ016).